The sequence spans 372 residues: DSC E3 ubiquitin ligase complex subunit 2 (372 aa).

5 helical membrane-spanning segments follow: residues 26 to 46, 54 to 74, 95 to 115, 126 to 146, and 160 to 180; these read VVAG…LHLL, ILLW…LFII, YMFI…SLLF, TFLI…TVFV, and VIPM…NAFL. The interval 246–314 is disordered; the sequence is TENENQVENP…LPTGPASQLY (69 aa). Polar residues predominate over residues 249–268; that stretch reads ENQVENPVSNADANDSPTRQ. Residue S264 is modified to Phosphoserine. T266 carries the post-translational modification Phosphothreonine. Residues 269–284 are compositionally biased toward low complexity; the sequence is NARATAIASSSNTAAS. A compositionally biased stretch (polar residues) spans 286-305; sequence RNRQQISHPPLGRTSSSSVL. In terms of domain architecture, UBA spans 332–368; that stretch reads EDINTVQTIMQTSRAQAIQALSQTNDVQRAVELLLEQ.

As to quaternary structure, component of the DSC E3 ubiquitin ligase complex composed of dsc1, dsc2, dsc3 and dsc4.

It is found in the golgi apparatus membrane. It catalyses the reaction S-ubiquitinyl-[E2 ubiquitin-conjugating enzyme]-L-cysteine + [acceptor protein]-L-lysine = [E2 ubiquitin-conjugating enzyme]-L-cysteine + N(6)-ubiquitinyl-[acceptor protein]-L-lysine.. The protein operates within protein modification; protein ubiquitination. In terms of biological role, component of the DSC E3 ubiquitin ligase complex which is required for the sre1 transcriptional activator proteolytic cleavage to release the soluble transcription factor from the membrane in low oxygen or sterol conditions. The complex also plays an important role in the multivesicular body (MVB) pathway and functions in a post-endoplasmic reticulum pathway for protein degradation. The protein is DSC E3 ubiquitin ligase complex subunit 2 (dsc2) of Schizosaccharomyces pombe (strain 972 / ATCC 24843) (Fission yeast).